A 386-amino-acid polypeptide reads, in one-letter code: MNIHEHQAKQILKKYGAVVPEGVFAFTVDELIEKAKSLKTEKFVLKAQIHAGGRGKAGGVKILNTIDELSVAAKELLGKTLVTHQTGPAGREVKRLYVEESSNIDKEFYLSCLVDRASSKIVFISSDQGGMDIEEVAEKTPEKIITTKIDITDEISDADCEKIIAIYALADDAKKQAIALIKSVYKMFLGTDANMVEVNPLILTKEKKIICLDAKVNFDSNALFRHPEIIELRDLNEEDPTEIDASKHDLAYIKLDGSIGCMVNGAGLAMATMDIIKLYGEEPANFLDVGGGASKEKVSAALKIILSDKNVKGILINIFGGIMRCDVLAQGVVDAAKEINISVPLVVRLAGTNFKEGKEILDNSGLKLISAENLDDAAQKIVEAIK.

An ATP-grasp domain is found at 9 to 244; that stretch reads KQILKKYGAV…LNEEDPTEID (236 aa). Residues lysine 46, 53–55, glutamate 99, serine 102, and glutamate 107 contribute to the ATP site; that span reads GRG. Residues asparagine 199 and aspartate 213 each coordinate Mg(2+). Substrate contacts are provided by residues asparagine 264 and 321–323; that span reads GIM.

Belongs to the succinate/malate CoA ligase beta subunit family. Heterotetramer of two alpha and two beta subunits. Mg(2+) serves as cofactor.

The catalysed reaction is succinate + ATP + CoA = succinyl-CoA + ADP + phosphate. It catalyses the reaction GTP + succinate + CoA = succinyl-CoA + GDP + phosphate. It functions in the pathway carbohydrate metabolism; tricarboxylic acid cycle; succinate from succinyl-CoA (ligase route): step 1/1. Functionally, succinyl-CoA synthetase functions in the citric acid cycle (TCA), coupling the hydrolysis of succinyl-CoA to the synthesis of either ATP or GTP and thus represents the only step of substrate-level phosphorylation in the TCA. The beta subunit provides nucleotide specificity of the enzyme and binds the substrate succinate, while the binding sites for coenzyme A and phosphate are found in the alpha subunit. This is Succinate--CoA ligase [ADP-forming] subunit beta from Pelagibacter ubique (strain HTCC1062).